The primary structure comprises 540 residues: Glucose-6-phosphate isomerase (540 aa).

Catalysis depends on Glu346, which acts as the Proton donor. Residues His377 and Lys505 contribute to the active site.

Belongs to the GPI family.

The protein resides in the cytoplasm. The catalysed reaction is alpha-D-glucose 6-phosphate = beta-D-fructose 6-phosphate. The protein operates within carbohydrate biosynthesis; gluconeogenesis. Its pathway is carbohydrate degradation; glycolysis; D-glyceraldehyde 3-phosphate and glycerone phosphate from D-glucose: step 2/4. Its function is as follows. Catalyzes the reversible isomerization of glucose-6-phosphate to fructose-6-phosphate. The sequence is that of Glucose-6-phosphate isomerase from Francisella tularensis subsp. mediasiatica (strain FSC147).